The following is a 580-amino-acid chain: MFS-type transporter thnB (580 aa).

The segment at 1-33 is disordered; that stretch reads MSGDYSATRKSENVDTSTTASQEDSSLAPEQPE. Residues 14–25 are compositionally biased toward polar residues; sequence VDTSTTASQEDS. 7 helical membrane-spanning segments follow: residues 60–80, 92–112, 125–145, 157–177, 188–208, 216–236, and 259–279; these read LITLVLAINLAMFLASLDQTI, FHGLSQVSWYGSAYFMCLGGF, LKISFAIAVFVFELGSLICGV, AIAGIGGAGITSGSTVILAFS, STMGVTYCIAFILGPLIGGAF, WCFYINLPIGGLAMALFFLFF, and VGTVLAMGGIISFILALQYAG. N-linked (GlcNAc...) asparagine glycosylation occurs at N285. Transmembrane regions (helical) follow at residues 286–306, 331–351, 364–384, 389–409, 421–441, 457–477, and 529–549; these read SSVVIGLLVGFVLIMVTLAAW, IFQFFFVGCYFLLLFYLPIYF, VDNLPLVLSACLFIILGGAAV, MATPYMTAGSAVAAVATGLLY, IGYQVLVGAGLAFPFQNALNI, SLYFFQILGGAFSISAAQAAF, and FAVSVGLVGMAFLSSLHMVMI.

The protein belongs to the major facilitator superfamily.

Its subcellular location is the membrane. In terms of biological role, MFS-type transporter; part of the gene cluster that produces the tetronate natural products trihazones. The sequence is that of MFS-type transporter thnB from Trichoderma harzianum (Hypocrea lixii).